The chain runs to 358 residues: tRNA-specific 2-thiouridylase MnmA (358 aa).

ATP-binding positions include 6–13 (AMSGGVDS) and Leu-32. Catalysis depends on Cys-101, which acts as the Nucleophile. An intrachain disulfide couples Cys-101 to Cys-193. Gly-125 is an ATP binding site. The interaction with tRNA stretch occupies residues 143–145 (KDQ). Cys-193 acts as the Cysteine persulfide intermediate in catalysis.

Belongs to the MnmA/TRMU family.

It is found in the cytoplasm. The enzyme catalyses S-sulfanyl-L-cysteinyl-[protein] + uridine(34) in tRNA + AH2 + ATP = 2-thiouridine(34) in tRNA + L-cysteinyl-[protein] + A + AMP + diphosphate + H(+). In terms of biological role, catalyzes the 2-thiolation of uridine at the wobble position (U34) of tRNA, leading to the formation of s(2)U34. The polypeptide is tRNA-specific 2-thiouridylase MnmA (Mycobacterium avium (strain 104)).